Reading from the N-terminus, the 971-residue chain is Translation initiation factor IF-2 (971 aa).

The interval 39-379 is disordered; that stretch reads DQDANRLRTR…APRGNRRNVK (341 aa). Positions 53–63 are enriched in basic and acidic residues; that stretch reads QGKEQAVEPRK. A compositionally biased stretch (polar residues) spans 65–75; sequence VPSQESKNLTQ. Positions 310-326 are enriched in low complexity; sequence RPQGQRPMGDRPQGQRP. Positions 342-370 are enriched in basic and acidic residues; that stretch reads PPKRQIGEKKKPQDRNFERKKEMEKEIRA. A tr-type G domain is found at 471–640; sequence SRPPVVTVMG…LLVAEIKELK (170 aa). The segment at 480-487 is G1; the sequence is GHVDHGKT. 480–487 is a binding site for GTP; that stretch reads GHVDHGKT. Positions 505–509 are G2; the sequence is GITQH. Residues 526-529 form a G3 region; the sequence is DTPG. Residues 526–530 and 580–583 contribute to the GTP site; these read DTPGH and NKID. Positions 580-583 are G4; it reads NKID. The segment at 616–618 is G5; sequence SAK.

Belongs to the TRAFAC class translation factor GTPase superfamily. Classic translation factor GTPase family. IF-2 subfamily.

It localises to the cytoplasm. One of the essential components for the initiation of protein synthesis. Protects formylmethionyl-tRNA from spontaneous hydrolysis and promotes its binding to the 30S ribosomal subunits. Also involved in the hydrolysis of GTP during the formation of the 70S ribosomal complex. This Desulfitobacterium hafniense (strain Y51) protein is Translation initiation factor IF-2.